The primary structure comprises 165 residues: Regulator of ribonuclease activity A (165 aa).

The protein belongs to the RraA family. As to quaternary structure, homotrimer. Binds to both RNA-binding sites in the C-terminal region of Rne and to RhlB.

The protein resides in the cytoplasm. Its function is as follows. Globally modulates RNA abundance by binding to RNase E (Rne) and regulating its endonucleolytic activity. Can modulate Rne action in a substrate-dependent manner by altering the composition of the degradosome. Modulates RNA-binding and helicase activities of the degradosome. This is Regulator of ribonuclease activity A from Pseudoalteromonas translucida (strain TAC 125).